The chain runs to 257 residues: Zinc import ATP-binding protein ZnuC (257 aa).

The 216-residue stretch at 6 to 221 folds into the ABC transporter domain; it reads IRLDQVGVTF…PAFVELFGKT (216 aa). 38 to 45 contributes to the ATP binding site; it reads GPNGAGKT.

It belongs to the ABC transporter superfamily. Zinc importer (TC 3.A.1.15.5) family. In terms of assembly, the complex is composed of two ATP-binding proteins (ZnuC), two transmembrane proteins (ZnuB) and a solute-binding protein (ZnuA).

It is found in the cell inner membrane. The catalysed reaction is Zn(2+)(out) + ATP(in) + H2O(in) = Zn(2+)(in) + ADP(in) + phosphate(in) + H(+)(in). In terms of biological role, part of the ABC transporter complex ZnuABC involved in zinc import. Responsible for energy coupling to the transport system. The sequence is that of Zinc import ATP-binding protein ZnuC from Pseudomonas putida (strain ATCC 47054 / DSM 6125 / CFBP 8728 / NCIMB 11950 / KT2440).